The primary structure comprises 409 residues: E3 ubiquitin-protein ligase MARCHF4 (409 aa).

The signal sequence occupies residues 1–17 (MLMPLGGLLWWWCCCCG). The interval 92–133 (GPREAVGRETPPLPPPPPLPPSGDDDWDGPATGPPASLLSSA) is disordered. A compositionally biased stretch (pro residues) spans 102-112 (PPLPPPPPLPP). The segment at 154 to 214 (DSGMRTPLCR…ELCYYKYHVI (61 aa)) adopts an RING-CH-type zinc-finger fold. Cysteine 162, cysteine 165, cysteine 178, cysteine 180, histidine 188, cysteine 191, cysteine 204, and cysteine 207 together coordinate Zn(2+). The next 2 helical transmembrane spans lie at 242–262 (LGSL…FSPS) and 271–291 (LFQI…GLII). Disordered stretches follow at residues 323-372 (EDQK…GPVS) and 389-409 (PHDQ…VTTV). Residues 328-343 (GGRTNLQTSSSAQANL) show a composition bias toward polar residues.

The protein resides in the golgi apparatus membrane. It catalyses the reaction S-ubiquitinyl-[E2 ubiquitin-conjugating enzyme]-L-cysteine + [acceptor protein]-L-lysine = [E2 ubiquitin-conjugating enzyme]-L-cysteine + N(6)-ubiquitinyl-[acceptor protein]-L-lysine.. The protein operates within protein modification; protein ubiquitination. Its function is as follows. E3 ubiquitin-protein ligase that may mediate ubiquitination of MHC-I and CD4, and promote their subsequent endocytosis and sorting to lysosomes via multivesicular bodies. E3 ubiquitin ligases accept ubiquitin from an E2 ubiquitin-conjugating enzyme in the form of a thioester and then directly transfer the ubiquitin to targeted substrates. This is E3 ubiquitin-protein ligase MARCHF4 (Marchf4) from Mus musculus (Mouse).